The chain runs to 244 residues: Type III pantothenate kinase (244 aa).

Position 11–18 (11–18) interacts with ATP; sequence DAGNTSIK. Residues Tyr-90 and 97–100 contribute to the substrate site; that span reads GIDR. The active-site Proton acceptor is Asp-99. K(+) is bound at residue Asp-119. Thr-122 serves as a coordination point for ATP. Substrate is bound at residue Thr-175.

It belongs to the type III pantothenate kinase family. Homodimer. NH4(+) serves as cofactor. It depends on K(+) as a cofactor.

It localises to the cytoplasm. The catalysed reaction is (R)-pantothenate + ATP = (R)-4'-phosphopantothenate + ADP + H(+). It functions in the pathway cofactor biosynthesis; coenzyme A biosynthesis; CoA from (R)-pantothenate: step 1/5. Its function is as follows. Catalyzes the phosphorylation of pantothenate (Pan), the first step in CoA biosynthesis. This is Type III pantothenate kinase from Marinomonas sp. (strain MWYL1).